We begin with the raw amino-acid sequence, 156 residues long: ATP synthase subunit b (156 aa).

The chain crosses the membrane as a helical span at residues 11–31; sequence AIAFVLFVLFCMKYVWPPLMA.

It belongs to the ATPase B chain family. In terms of assembly, F-type ATPases have 2 components, F(1) - the catalytic core - and F(0) - the membrane proton channel. F(1) has five subunits: alpha(3), beta(3), gamma(1), delta(1), epsilon(1). F(0) has three main subunits: a(1), b(2) and c(10-14). The alpha and beta chains form an alternating ring which encloses part of the gamma chain. F(1) is attached to F(0) by a central stalk formed by the gamma and epsilon chains, while a peripheral stalk is formed by the delta and b chains.

The protein resides in the cell inner membrane. Functionally, f(1)F(0) ATP synthase produces ATP from ADP in the presence of a proton or sodium gradient. F-type ATPases consist of two structural domains, F(1) containing the extramembraneous catalytic core and F(0) containing the membrane proton channel, linked together by a central stalk and a peripheral stalk. During catalysis, ATP synthesis in the catalytic domain of F(1) is coupled via a rotary mechanism of the central stalk subunits to proton translocation. In terms of biological role, component of the F(0) channel, it forms part of the peripheral stalk, linking F(1) to F(0). The polypeptide is ATP synthase subunit b (Shigella boydii serotype 18 (strain CDC 3083-94 / BS512)).